The primary structure comprises 217 residues: Histone H1-gamma, late (217 aa).

Disordered stretches follow at residues 1–21 and 80–217; these read MSAAKPKVAKKARVAPAHPPS and GKGA…PAKK. An H15 domain is found at 17–91; sequence AHPPSSQMVV…GASGSFKLGK (75 aa). Residues 104–113 are compositionally biased toward basic residues; the sequence is IAAKKAKLAA. Basic and acidic residues predominate over residues 114-123; that stretch reads KKKEQREKKA. Residues 124-217 show a composition bias toward basic residues; that stretch reads LKTKARKEKV…AKKAAKPAKK (94 aa).

It belongs to the histone H1/H5 family.

It localises to the nucleus. The protein localises to the chromosome. Its function is as follows. Histones H1 are necessary for the condensation of nucleosome chains into higher-order structures. This is Histone H1-gamma, late from Strongylocentrotus purpuratus (Purple sea urchin).